Here is a 314-residue protein sequence, read N- to C-terminus: Olfactory receptor 5G9 (314 aa).

Residues 1-25 lie on the Extracellular side of the membrane; the sequence is MADENYTRITEFIFIGLRYHPNLQV. A glycan (N-linked (GlcNAc...) asparagine) is linked at Asn-5. A helical transmembrane segment spans residues 26–46; it reads FLFLLFLLFYLVTMTGNLGMI. Residues 47–54 are Cytoplasmic-facing; sequence ILIRVDSR. A helical transmembrane segment spans residues 55–75; the sequence is LHTPMYFFLSHLSFVDICFSS. The Extracellular portion of the chain corresponds to 76-99; that stretch reads VVAPKMLTDFFADKKAISFLGCVL. Cysteines 97 and 189 form a disulfide. A helical membrane pass occupies residues 100 to 120; sequence QQWFFGFFVAIECLLLASMAY. Residues 121-133 are Cytoplasmic-facing; sequence DRYVAICNPLLYS. The chain crosses the membrane as a helical span at residues 134–154; sequence VAMSQRLCIQLVIGPYAVGFF. The Extracellular segment spans residues 155–196; that stretch reads NTMTHTTAAFRLPFCGSNIINHFFCDMSPILSLICADIRINK. A helical membrane pass occupies residues 197–217; it reads LLVFIVAGAVLIVSSTTIIVS. Over 218–237 the chain is Cytoplasmic; the sequence is YFHILIAILRIRSAEGRRKA. The helical transmembrane segment at 238–258 threads the bilayer; that stretch reads FSTCSSHVTAVSILYGTLFFI. Residues 259-271 lie on the Extracellular side of the membrane; that stretch reads YVRPSAISSLDLN. The chain crosses the membrane as a helical span at residues 272-292; the sequence is KVVSVFYTAVIPMLNPLIYSL. Over 293-314 the chain is Cytoplasmic; sequence RNKEVKSAMGRTVAKAKVFLKN.

Belongs to the G-protein coupled receptor 1 family.

Its subcellular location is the cell membrane. Its function is as follows. Potential odorant receptor. The sequence is that of Olfactory receptor 5G9 from Mus musculus (Mouse).